A 150-amino-acid chain; its full sequence is Flagellar assembly factor FliW (150 aa).

It belongs to the FliW family. As to quaternary structure, interacts with translational regulator CsrA. Interacts with flagellins FlaB1, FlaB2 and FlaB3.

It is found in the cytoplasm. Functionally, acts as an anti-CsrA protein, binds CsrA and prevents it from repressing translation of its target genes, one of which is flagellin. Binds to flagellin and participates in the assembly of the flagellum. Binds to the C-terminal region of flagellin, which is implicated in polymerization, and participates in the assembly of the flagellum. The protein is Flagellar assembly factor FliW of Treponema pallidum (strain Nichols).